The primary structure comprises 333 residues: L-lactate dehydrogenase B chain (333 aa).

Residues 29-57 and Arg99 each bind NAD(+); that span reads GQVG…LEDK. Substrate-binding residues include Arg106, Asn138, and Arg169. NAD(+) is bound at residue Asn138. His193 (proton acceptor) is an active-site residue. A substrate-binding site is contributed by Thr248.

This sequence belongs to the LDH/MDH superfamily. LDH family. Homotetramer.

It localises to the cytoplasm. The catalysed reaction is (S)-lactate + NAD(+) = pyruvate + NADH + H(+). It functions in the pathway fermentation; pyruvate fermentation to lactate; (S)-lactate from pyruvate: step 1/1. Interconverts simultaneously and stereospecifically pyruvate and lactate with concomitant interconversion of NADH and NAD(+). In Gallus gallus (Chicken), this protein is L-lactate dehydrogenase B chain (LDHB).